We begin with the raw amino-acid sequence, 694 residues long: Methionine--tRNA ligase (694 aa).

Residues 12–22 (PYANGPLHLGH) carry the 'HIGH' region motif. Cysteine 143, cysteine 146, cysteine 156, and cysteine 159 together coordinate Zn(2+). Positions 330-334 (KMSKS) match the 'KMSKS' region motif. Position 333 (lysine 333) interacts with ATP. Residues 552–577 (APAAPAATTKPAPSKADAAPAAVANP) are disordered. The tRNA-binding domain maps to 591–694 (DFAKLDLRIG…AGAQPGMPVR (104 aa)).

The protein belongs to the class-I aminoacyl-tRNA synthetase family. MetG type 1 subfamily. As to quaternary structure, homodimer. It depends on Zn(2+) as a cofactor.

It localises to the cytoplasm. The enzyme catalyses tRNA(Met) + L-methionine + ATP = L-methionyl-tRNA(Met) + AMP + diphosphate. Is required not only for elongation of protein synthesis but also for the initiation of all mRNA translation through initiator tRNA(fMet) aminoacylation. This chain is Methionine--tRNA ligase, found in Xanthomonas campestris pv. campestris (strain B100).